The chain runs to 433 residues: GTPase Der (433 aa).

EngA-type G domains are found at residues 5-167 and 174-349; these read KKVL…GRVN and IKVG…DQLE. Residues 11–18, 58–62, 119–122, 180–187, 227–231, and 292–295 contribute to the GTP site; these read GRPNVGKS, DTGGF, NKVD, GKPNSGKS, DTAGI, and SKWD. In terms of domain architecture, KH-like spans 349–429; it reads ELKTNTPDLN…PILVELREKI (81 aa).

Belongs to the TRAFAC class TrmE-Era-EngA-EngB-Septin-like GTPase superfamily. EngA (Der) GTPase family. Associates with the 50S ribosomal subunit.

Its function is as follows. GTPase that plays an essential role in the late steps of ribosome biogenesis. The polypeptide is GTPase Der (Borrelia garinii subsp. bavariensis (strain ATCC BAA-2496 / DSM 23469 / PBi) (Borreliella bavariensis)).